A 431-amino-acid chain; its full sequence is Nuclear bridge Ish domain protein les1 (431 aa).

The N-terminal stretch at M1–S21 is a signal peptide.

The protein localises to the nucleus inner membrane. Inner nuclear envelope protein involved in nuclear fission, which is achieved via local disassembly of nuclear pores within the narrow bridge that links segregating daughter nuclei. Les1 restricts the process of local nuclear envelope breakdown to the bridge midzone to prevent the leakage of material from daughter nuclei during mitosis. This is Nuclear bridge Ish domain protein les1 from Schizosaccharomyces pombe (strain 972 / ATCC 24843) (Fission yeast).